The following is a 704-amino-acid chain: Inhibitor of carbonic anhydrase (704 aa).

The first 19 residues, 1 to 19 (MRLAFCVLLCAGSLGLCLA), serve as a signal peptide directing secretion. Transferrin-like domains lie at 25-347 (VRWC…HLRR) and 357-689 (VMWC…NVRQ). 16 disulfides stabilise this stretch: Cys28-Cys67, Cys38-Cys58, Cys137-Cys213, Cys172-Cys188, Cys175-Cys196, Cys185-Cys198, Cys246-Cys260, Cys360-Cys392, Cys370-Cys383, Cys417-Cys699, Cys440-Cys662, Cys472-Cys549, Cys496-Cys690, Cys506-Cys520, Cys517-Cys532, and Cys589-Cys603. Asn491 is a glycosylation site (N-linked (GlcNAc...) asparagine).

This sequence belongs to the transferrin family. As to quaternary structure, monomer. Interacts (via transferrin-like domain 2) with CA2. Post-translationally, N-glycosylated. As to expression, blood plasma (at protein level).

It is found in the secreted. In terms of biological role, inhibitor for carbonic anhydrase 2 (CA2). Does not bind iron ions. The polypeptide is Inhibitor of carbonic anhydrase (Sus scrofa (Pig)).